A 133-amino-acid polypeptide reads, in one-letter code: Large ribosomal subunit protein bL17 (133 aa).

This sequence belongs to the bacterial ribosomal protein bL17 family. As to quaternary structure, part of the 50S ribosomal subunit. Contacts protein L32.

This Nitratidesulfovibrio vulgaris (strain DSM 19637 / Miyazaki F) (Desulfovibrio vulgaris) protein is Large ribosomal subunit protein bL17.